The primary structure comprises 266 residues: Heat-inducible transcription repressor HrcA (266 aa).

The protein belongs to the HrcA family.

Negative regulator of class I heat shock genes (grpE-dnaK-dnaJ and groELS operons). Prevents heat-shock induction of these operons. The sequence is that of Heat-inducible transcription repressor HrcA from Helicobacter pylori (strain ATCC 700392 / 26695) (Campylobacter pylori).